The primary structure comprises 518 residues: 2,3-bisphosphoglycerate-independent phosphoglycerate mutase (518 aa).

Positions 14 and 64 each coordinate Mn(2+). S64 functions as the Phosphoserine intermediate in the catalytic mechanism. Substrate-binding positions include H125, 155-156 (RD), R187, R193, 264-267 (RPDR), and K337. Residues D404, H408, D445, H446, and H467 each contribute to the Mn(2+) site.

Belongs to the BPG-independent phosphoglycerate mutase family. The cofactor is Mn(2+).

It catalyses the reaction (2R)-2-phosphoglycerate = (2R)-3-phosphoglycerate. It functions in the pathway carbohydrate degradation; glycolysis; pyruvate from D-glyceraldehyde 3-phosphate: step 3/5. Catalyzes the interconversion of 2-phosphoglycerate and 3-phosphoglycerate. In Methanococcoides burtonii (strain DSM 6242 / NBRC 107633 / OCM 468 / ACE-M), this protein is 2,3-bisphosphoglycerate-independent phosphoglycerate mutase.